A 1214-amino-acid chain; its full sequence is Peregrin (1214 aa).

The segment at tyrosine 21 to histidine 47 adopts a C2H2-type zinc-finger fold. Disordered regions lie at residues tyrosine 43–arginine 87 and valine 118–proline 177. The segment covering leucine 58 to glutamine 67 has biased composition (basic residues). The interaction with KAT6A and KAT6B stretch occupies residues arginine 59–tyrosine 222. Positions glutamine 74 to proline 85 are enriched in low complexity. Residues valine 119–proline 130 are compositionally biased toward acidic residues. The residue at position 120 (serine 120) is a Phosphoserine. Position 147 is an N6-acetyllysine (lysine 147). Positions serine 148–asparagine 167 are enriched in basic residues. Serine 238 carries the phosphoserine modification. The PHD-type 1 zinc-finger motif lies at aspartate 273–serine 323. The segment at alanine 327 to valine 360 adopts a C2HC pre-PHD-type zinc-finger fold. The segment at leucine 384–threonine 448 adopts a PHD-type 2 zinc-finger fold. The segment at threonine 448–lysine 489 is disordered. A phosphoserine mark is found at serine 460 and serine 462. Residues glycine 464–glutamate 474 are compositionally biased toward acidic residues. Residues leucine 501–arginine 821 are interaction with MEAF6 and ING5. The interval tyrosine 543–glutamate 1079 is required for RUNX1 and RUNX2 transcriptional activation. Position 580 is an N6-acetyllysine (lysine 580). The 105-residue stretch at methionine 628–alanine 732 folds into the Bromo domain. Residues leucine 819–serine 1062 form a disordered region. The segment covering histidine 825–glycine 838 has biased composition (basic and acidic residues). Position 858 is a phosphothreonine (threonine 858). Residues threonine 858–serine 871 are compositionally biased toward low complexity. A phosphoserine mark is found at serine 860, serine 917, serine 922, and serine 926. A compositionally biased stretch (low complexity) spans serine 993–serine 1021. Serine 1076 bears the Phosphoserine mark. Positions alanine 1085 to asparagine 1168 constitute a PWWP domain. Phosphoserine is present on serine 1187.

In terms of assembly, component of some HBO1 complex composed of KAT7/HBO1, MEAF6, ING5, and BRPF1. Component of the MOZ/MORF complex composed at least of ING5, KAT6A, KAT6B, MEAF6 and one of BRPF1, BRD1/BRPF2 and BRPF3. Interacts (via PHD-type zinc finger domains) with unmethylated histone H3 at 'Lys-4' (H3K4me0). Interacts with trimethylated 'Lys-36' of histone H3 (H3K36me3). Interacts with ING5; interaction directs BRPF1 to H4K4me3-enriched chromatin at the 5' of active genes. Interacts with KAT7. Acetylated by KAT6A. High levels in testis.

The protein localises to the nucleus. It is found in the chromosome. It localises to the cytoplasm. In terms of biological role, scaffold subunit of various histone acetyltransferase (HAT) complexes, such as the MOZ/MORF and HBO1 complexes, which have a histone H3 acetyltransferase activity. Plays a key role in HBO1 complex by directing KAT7/HBO1 specificity towards histone H3 'Lys-14' acetylation (H3K14ac). Some HAT complexes preferentially mediate histone H3 'Lys-23' (H3K23ac) acetylation. Positively regulates the transcription of RUNX1 and RUNX2. This Homo sapiens (Human) protein is Peregrin.